A 308-amino-acid chain; its full sequence is tRNA dimethylallyltransferase (308 aa).

Glycine 11–serine 18 is an ATP binding site. Position 13–18 (threonine 13–serine 18) interacts with substrate. Residues aspartate 36–glutamine 39 are interaction with substrate tRNA.

Belongs to the IPP transferase family. In terms of assembly, monomer. Mg(2+) serves as cofactor.

It catalyses the reaction adenosine(37) in tRNA + dimethylallyl diphosphate = N(6)-dimethylallyladenosine(37) in tRNA + diphosphate. Functionally, catalyzes the transfer of a dimethylallyl group onto the adenine at position 37 in tRNAs that read codons beginning with uridine, leading to the formation of N6-(dimethylallyl)adenosine (i(6)A). The polypeptide is tRNA dimethylallyltransferase (Bdellovibrio bacteriovorus (strain ATCC 15356 / DSM 50701 / NCIMB 9529 / HD100)).